The primary structure comprises 306 residues: Latrophilin receptor-like protein A (306 aa).

Over 1–15 (MPSQLLNTVLSYLTD) the chain is Extracellular. A helical transmembrane segment spans residues 16–36 (ILLSLSIVGSFLTIFTFMLYP). Topologically, residues 37–41 (KLRSY) are cytoplasmic. Residues 42–62 (PIKLIIYLCMSIVFSLFFFEI) form a helical membrane-spanning segment. Residues 63–70 (SFRSSNSL) are Extracellular-facing. The helical transmembrane segment at 71 to 91 (FCIPAAILVHYFFLANFFWTF) threads the bilayer. Residues 92–113 (SVSFNFFQMIVKRNRDSEFYER) are Cytoplasmic-facing. A helical transmembrane segment spans residues 114–134 (YYHLISWGIPFIIIIFCAAFK). The Extracellular portion of the chain corresponds to 135–152 (KYVDRGGFCYLEDQYSVY). A helical transmembrane segment spans residues 153-173 (FGFFMPGVIIVCSNICIYVFV). The Cytoplasmic portion of the chain corresponds to 174 to 196 (AKEIYKTLRHTPTQKRQTVKEFR). The helical transmembrane segment at 197–217 (VYFSIFVSIGSSWIFGFIYMF) threads the bilayer. Residues 218 to 222 (SDSNS) lie on the Extracellular side of the membrane. A helical membrane pass occupies residues 223–243 (IIGYIFLILFSISTSLQGFFI). Topologically, residues 244–306 (FISYCLNYKV…TTTTTNVYSA (63 aa)) are cytoplasmic. A disordered region spans residues 279–306 (TTQSGPTGTTDSSSTMTSTTTTTNVYSA).

Belongs to the G-protein coupled receptor 2 family. LN-TM7 subfamily.

It localises to the membrane. In Dictyostelium discoideum (Social amoeba), this protein is Latrophilin receptor-like protein A (lrlA).